Consider the following 324-residue polypeptide: DNA repair and recombination protein RadA (324 aa).

114–121 (GEFGSGKT) contributes to the ATP binding site.

It belongs to the eukaryotic RecA-like protein family.

Its function is as follows. Involved in DNA repair and in homologous recombination. Binds and assemble on single-stranded DNA to form a nucleoprotein filament. Hydrolyzes ATP in a ssDNA-dependent manner and promotes DNA strand exchange between homologous DNA molecules. The chain is DNA repair and recombination protein RadA from Saccharolobus islandicus (strain Y.N.15.51 / Yellowstone #2) (Sulfolobus islandicus).